We begin with the raw amino-acid sequence, 132 residues long: DNA-directed RNA polymerase subunit omega (132 aa).

The interval 89 to 109 (HSSESESIFNTSSQEEGTSFD) is disordered. Residues 96-105 (IFNTSSQEEG) show a composition bias toward polar residues.

It belongs to the RNA polymerase subunit omega family. The RNAP catalytic core consists of 2 alpha, 1 beta, 1 beta' and 1 omega subunit. When a sigma factor is associated with the core the holoenzyme is formed, which can initiate transcription.

It catalyses the reaction RNA(n) + a ribonucleoside 5'-triphosphate = RNA(n+1) + diphosphate. In terms of biological role, promotes RNA polymerase assembly. Latches the N- and C-terminal regions of the beta' subunit thereby facilitating its interaction with the beta and alpha subunits. The chain is DNA-directed RNA polymerase subunit omega from Bartonella tribocorum (strain CIP 105476 / IBS 506).